We begin with the raw amino-acid sequence, 369 residues long: Anhydro-N-acetylmuramic acid kinase (369 aa).

Residue 12 to 19 (GTSMDGVD) participates in ATP binding.

The protein belongs to the anhydro-N-acetylmuramic acid kinase family.

It catalyses the reaction 1,6-anhydro-N-acetyl-beta-muramate + ATP + H2O = N-acetyl-D-muramate 6-phosphate + ADP + H(+). The protein operates within amino-sugar metabolism; 1,6-anhydro-N-acetylmuramate degradation. It participates in cell wall biogenesis; peptidoglycan recycling. In terms of biological role, catalyzes the specific phosphorylation of 1,6-anhydro-N-acetylmuramic acid (anhMurNAc) with the simultaneous cleavage of the 1,6-anhydro ring, generating MurNAc-6-P. Is required for the utilization of anhMurNAc either imported from the medium or derived from its own cell wall murein, and thus plays a role in cell wall recycling. The sequence is that of Anhydro-N-acetylmuramic acid kinase from Shewanella sp. (strain W3-18-1).